The primary structure comprises 520 residues: Leucine aminopeptidase 1 (520 aa).

Residues lysine 288 and aspartate 293 each contribute to the Mn(2+) site. The active site involves lysine 300. Aspartate 313, aspartate 373, and glutamate 375 together coordinate Mn(2+). The active site involves arginine 377.

It belongs to the peptidase M17 family. As to quaternary structure, homohexamer (dimer of homotrimers). Mn(2+) is required as a cofactor.

The protein resides in the cytoplasm. It carries out the reaction Release of an N-terminal amino acid, Xaa-|-Yaa-, in which Xaa is preferably Leu, but may be other amino acids including Pro although not Arg or Lys, and Yaa may be Pro. Amino acid amides and methyl esters are also readily hydrolyzed, but rates on arylamides are exceedingly low.. The enzyme catalyses Release of N-terminal proline from a peptide.. Functionally, presumably involved in the processing and regular turnover of intracellular proteins. Catalyzes the removal of unsubstituted N-terminal amino acids from various peptides. Possesses leucine aminopeptidase activity against the model substrate leucine-amido methyl coumarin. Possesses Cys-Gly dipeptidase activity. In addition, can cleave Cys-Leu and Leu-Cys dipeptides. Its function is as follows. Functions as a molecular chaperone to protect proteins from heat-induced damage. This is Leucine aminopeptidase 1 from Arabidopsis thaliana (Mouse-ear cress).